A 625-amino-acid polypeptide reads, in one-letter code: Arginine--tRNA ligase (625 aa).

Positions 128–138 (VNPTKPLHMGH) match the 'HIGH' region motif.

Belongs to the class-I aminoacyl-tRNA synthetase family.

Its subcellular location is the cytoplasm. The catalysed reaction is tRNA(Arg) + L-arginine + ATP = L-arginyl-tRNA(Arg) + AMP + diphosphate. This chain is Arginine--tRNA ligase (argS), found in Pyrococcus abyssi (strain GE5 / Orsay).